The following is a 216-amino-acid chain: uncharacterized protein (216 aa).

A disordered region spans residues 55–216 (NEDKAEAMSN…NEKEKDVNPK (162 aa)). 3 stretches are compositionally biased toward basic and acidic residues: residues 134–152 (LTEK…DNHV), 177–187 (KINDKSDDTLH), and 207–216 (NEKEKDVNPK).

This is an uncharacterized protein from Caenorhabditis elegans.